The following is a 237-amino-acid chain: Phosphoribosylaminoimidazole-succinocarboxamide synthase (237 aa).

Belongs to the SAICAR synthetase family.

The enzyme catalyses 5-amino-1-(5-phospho-D-ribosyl)imidazole-4-carboxylate + L-aspartate + ATP = (2S)-2-[5-amino-1-(5-phospho-beta-D-ribosyl)imidazole-4-carboxamido]succinate + ADP + phosphate + 2 H(+). It functions in the pathway purine metabolism; IMP biosynthesis via de novo pathway; 5-amino-1-(5-phospho-D-ribosyl)imidazole-4-carboxamide from 5-amino-1-(5-phospho-D-ribosyl)imidazole-4-carboxylate: step 1/2. The polypeptide is Phosphoribosylaminoimidazole-succinocarboxamide synthase (Serratia proteamaculans (strain 568)).